The chain runs to 315 residues: Methenyltetrahydromethanopterin cyclohydrolase (315 aa).

The protein belongs to the MCH family.

The protein resides in the cytoplasm. It catalyses the reaction 5,10-methenyl-5,6,7,8-tetrahydromethanopterin + H2O = N(5)-formyl-5,6,7,8-tetrahydromethanopterin + H(+). It participates in one-carbon metabolism; methanogenesis from CO(2); 5,10-methenyl-5,6,7,8-tetrahydromethanopterin from CO(2): step 3/3. In terms of biological role, catalyzes the reversible interconversion of 5-formyl-H(4)MPT to methenyl-H(4)MPT(+). This chain is Methenyltetrahydromethanopterin cyclohydrolase, found in Methanospirillum hungatei JF-1 (strain ATCC 27890 / DSM 864 / NBRC 100397 / JF-1).